A 261-amino-acid chain; its full sequence is Thioesterase TesA (261 aa).

Active-site residues include S104, D208, and H236.

This sequence belongs to the thioesterase family.

It carries out the reaction a fatty acyl-CoA + H2O = a fatty acid + CoA + H(+). Functionally, involved in the synthesis of both phthiocerol dimycocerosates (PDIMs) and phenolic glycolipids (PGLs), which are structurally related lipids non-covalently bound to the outer cell wall layer of M.tuberculosis and are important virulence factors. This is Thioesterase TesA (tesA) from Mycobacterium leprae (strain TN).